The sequence spans 120 residues: Holo-[acyl-carrier-protein] synthase (120 aa).

Mg(2+)-binding residues include D8 and E58.

Belongs to the P-Pant transferase superfamily. AcpS family. Mg(2+) is required as a cofactor.

The protein resides in the cytoplasm. The enzyme catalyses apo-[ACP] + CoA = holo-[ACP] + adenosine 3',5'-bisphosphate + H(+). Functionally, transfers the 4'-phosphopantetheine moiety from coenzyme A to a Ser of acyl-carrier-protein. The chain is Holo-[acyl-carrier-protein] synthase from Limosilactobacillus reuteri (strain DSM 20016) (Lactobacillus reuteri).